The chain runs to 339 residues: Phenylalanine--tRNA ligase alpha subunit (339 aa).

Residue E254 coordinates Mg(2+).

The protein belongs to the class-II aminoacyl-tRNA synthetase family. Phe-tRNA synthetase alpha subunit type 1 subfamily. In terms of assembly, tetramer of two alpha and two beta subunits. Mg(2+) is required as a cofactor.

It localises to the cytoplasm. The enzyme catalyses tRNA(Phe) + L-phenylalanine + ATP = L-phenylalanyl-tRNA(Phe) + AMP + diphosphate + H(+). The chain is Phenylalanine--tRNA ligase alpha subunit from Clostridium acetobutylicum (strain ATCC 824 / DSM 792 / JCM 1419 / IAM 19013 / LMG 5710 / NBRC 13948 / NRRL B-527 / VKM B-1787 / 2291 / W).